The sequence spans 402 residues: uncharacterized protein (402 aa).

The tract at residues 332–402 (MFSSSSSSSE…PEPPPGKPGR (71 aa)) is disordered. The segment covering 370–379 (SETTSLQQYS) has biased composition (polar residues). Residues 393 to 402 (PEPPPGKPGR) show a composition bias toward pro residues.

This is an uncharacterized protein from Mus musculus (Mouse).